The primary structure comprises 120 residues: Large ribosomal subunit protein uL22 (120 aa).

Residues 1 to 22 (MLVNRRYTAKGKNLPSSPKKVR) form a disordered region.

Belongs to the universal ribosomal protein uL22 family. Part of the 50S ribosomal subunit.

Its function is as follows. This protein binds specifically to 23S rRNA; its binding is stimulated by other ribosomal proteins, e.g. L4, L17, and L20. It is important during the early stages of 50S assembly. It makes multiple contacts with different domains of the 23S rRNA in the assembled 50S subunit and ribosome. The globular domain of the protein is located near the polypeptide exit tunnel on the outside of the subunit, while an extended beta-hairpin is found that lines the wall of the exit tunnel in the center of the 70S ribosome. This is Large ribosomal subunit protein uL22 from Borreliella burgdorferi (strain ATCC 35210 / DSM 4680 / CIP 102532 / B31) (Borrelia burgdorferi).